Here is a 218-residue protein sequence, read N- to C-terminus: N-(5'-phosphoribosyl)anthranilate isomerase (218 aa).

It belongs to the TrpF family.

It catalyses the reaction N-(5-phospho-beta-D-ribosyl)anthranilate = 1-(2-carboxyphenylamino)-1-deoxy-D-ribulose 5-phosphate. The protein operates within amino-acid biosynthesis; L-tryptophan biosynthesis; L-tryptophan from chorismate: step 3/5. This chain is N-(5'-phosphoribosyl)anthranilate isomerase, found in Rhodospirillum rubrum (strain ATCC 11170 / ATH 1.1.1 / DSM 467 / LMG 4362 / NCIMB 8255 / S1).